A 258-amino-acid chain; its full sequence is Probable succinate transporter subunit YjjP (258 aa).

5 helical membrane-spanning segments follow: residues 116–137 (YPRWLLVLMVGLSCACFCKLNN), 143–160 (AVVTFFASTVAMYIRQLL), 171–191 (FCITAFVATTISGLMLRLPAF), 197–217 (IAMAASVLLLVPGFPLINAVA), and 231–251 (WAIASLLTLATCIGVVMAMTM).

Belongs to the ThrE exporter (TC 2.A.79) family. In terms of assembly, the transporter is composed of YjjB and YjjP.

It is found in the cell inner membrane. Its function is as follows. Involved in succinate export with YjjB. Both proteins are required for export. Participates in succinate export, but also in the export of other dicarboxylates, such as fumarate and malate. Contributes to succinate production under both aerobic and anaerobic conditions, and increases fumarate and malate production during anaerobic succinate production. The protein is Probable succinate transporter subunit YjjP of Klebsiella aerogenes (strain ATCC 13048 / DSM 30053 / CCUG 1429 / JCM 1235 / KCTC 2190 / NBRC 13534 / NCIMB 10102 / NCTC 10006 / CDC 819-56) (Enterobacter aerogenes).